A 178-amino-acid polypeptide reads, in one-letter code: ATP synthase subunit delta (178 aa).

This sequence belongs to the ATPase delta chain family. As to quaternary structure, F-type ATPases have 2 components, F(1) - the catalytic core - and F(0) - the membrane proton channel. F(1) has five subunits: alpha(3), beta(3), gamma(1), delta(1), epsilon(1). F(0) has three main subunits: a(1), b(2) and c(10-14). The alpha and beta chains form an alternating ring which encloses part of the gamma chain. F(1) is attached to F(0) by a central stalk formed by the gamma and epsilon chains, while a peripheral stalk is formed by the delta and b chains.

It localises to the cell inner membrane. Its function is as follows. F(1)F(0) ATP synthase produces ATP from ADP in the presence of a proton or sodium gradient. F-type ATPases consist of two structural domains, F(1) containing the extramembraneous catalytic core and F(0) containing the membrane proton channel, linked together by a central stalk and a peripheral stalk. During catalysis, ATP synthesis in the catalytic domain of F(1) is coupled via a rotary mechanism of the central stalk subunits to proton translocation. This protein is part of the stalk that links CF(0) to CF(1). It either transmits conformational changes from CF(0) to CF(1) or is implicated in proton conduction. This Marinomonas sp. (strain MWYL1) protein is ATP synthase subunit delta.